The following is a 538-amino-acid chain: Beta-1,4-mannosyl-glycoprotein 4-beta-N-acetylglucosaminyltransferase (538 aa).

Residues 1 to 7 (MKMRRYK) are Cytoplasmic-facing. Residues 8–23 (LFLMFCMAGLCLISFL) traverse the membrane as a helical; Signal-anchor for type II membrane protein segment. Over 24–538 (HFFKTLSYVT…VRGKLDTTEG (515 aa)) the chain is Lumenal. Residues 121-151 (GTRMLEKPSPGRTEEKTKVAEGSSVRGPARR) are disordered. N245, N263, and N401 each carry an N-linked (GlcNAc...) asparagine glycan. The interval 509-538 (PKSTVEGGRRNQGSDGRSSAVRGKLDTTEG) is disordered.

This sequence belongs to the glycosyltransferase 17 family. Interacts with MGAT4D.

It localises to the golgi apparatus membrane. The enzyme catalyses N(4)-{beta-D-GlcNAc-(1-&gt;2)-alpha-D-Man-(1-&gt;3)-[beta-D-GlcNAc-(1-&gt;2)-alpha-D-Man-(1-&gt;6)]-beta-D-Man-(1-&gt;4)-beta-D-GlcNAc-(1-&gt;4)-beta-D-GlcNAc}-L-asparaginyl-[protein] + UDP-N-acetyl-alpha-D-glucosamine = N(4)-{beta-D-GlcNAc-(1-&gt;2)-alpha-D-Man-(1-&gt;3)-[beta-D-GlcNAc-(1-&gt;4)]-[beta-D-GlcNAc-(1-&gt;2)-alpha-D-Man-(1-&gt;6)]-beta-D-Man-(1-&gt;4)-beta-D-GlcNAc-(1-&gt;4)-beta-D-GlcNAc}-L-asparaginyl-[protein] + UDP + H(+). It participates in protein modification; protein glycosylation. In terms of biological role, it is involved in the regulation of the biosynthesis and biological function of glycoprotein oligosaccharides. Catalyzes the addition of N-acetylglucosamine in beta 1-4 linkage to the beta-linked mannose of the trimannosyl core of N-linked sugar chains, called bisecting N-acetylglucosamine (GlcNAc). It is one of the most important enzymes involved in the regulation of the biosynthesis of glycoprotein oligosaccharides. The addition of this bisecting GlcNAc residue alters not only the composition, but also the conformation of the N-glycan. The introduction of the bisecting GlcNAc residue results in the suppression of further processing and elongation of N-glycans, precluding the formation of beta-1,6 GlcNAc branching, catalyzed by MGAT5 since it is unable to use the bisected oligosaccharide as a substrate. Addition of bisecting N-acetylglucosamine to CDH1/E-cadherin modulates CDH1 cell membrane location. Inhibits NeuAc-alpha-2,3-Gal-beta-1,4-GlcNAc- formation which modulates sialylation levels and plays a role in cell migration regulation. In brain, addition of bisecting N-acetylglucosamine to BACE1 blocks its lysosomal targeting in response to oxidative stress and further degradation which increases its location to early endosome and the APP cleavage. This chain is Beta-1,4-mannosyl-glycoprotein 4-beta-N-acetylglucosaminyltransferase (Mgat3), found in Rattus norvegicus (Rat).